Consider the following 370-residue polypeptide: Biotin synthase (370 aa).

The Radical SAM core domain maps to 50–276; the sequence is FSDGTVDACS…IAVYRFLHPE (227 aa). [4Fe-4S] cluster-binding residues include Cys-68, Cys-72, and Cys-75. Positions 208 and 280 each coordinate [2Fe-2S] cluster. The tract at residues 328 to 370 is disordered; that stretch reads AGLEPNREANTFDPESVKARHRSPAAETASNANRTNATTETDD. Positions 352–370 are enriched in low complexity; it reads AAETASNANRTNATTETDD.

It belongs to the radical SAM superfamily. Biotin synthase family. As to quaternary structure, homodimer. Requires [4Fe-4S] cluster as cofactor. [2Fe-2S] cluster is required as a cofactor.

The catalysed reaction is (4R,5S)-dethiobiotin + (sulfur carrier)-SH + 2 reduced [2Fe-2S]-[ferredoxin] + 2 S-adenosyl-L-methionine = (sulfur carrier)-H + biotin + 2 5'-deoxyadenosine + 2 L-methionine + 2 oxidized [2Fe-2S]-[ferredoxin]. It participates in cofactor biosynthesis; biotin biosynthesis; biotin from 7,8-diaminononanoate: step 2/2. Its function is as follows. Catalyzes the conversion of dethiobiotin (DTB) to biotin by the insertion of a sulfur atom into dethiobiotin via a radical-based mechanism. This chain is Biotin synthase, found in Natronomonas pharaonis (strain ATCC 35678 / DSM 2160 / CIP 103997 / JCM 8858 / NBRC 14720 / NCIMB 2260 / Gabara) (Halobacterium pharaonis).